A 303-amino-acid chain; its full sequence is 1D-myo-inositol 2-acetamido-2-deoxy-alpha-D-glucopyranoside deacetylase (303 aa).

3 residues coordinate Zn(2+): histidine 13, aspartate 16, and histidine 147.

The protein belongs to the MshB deacetylase family. Zn(2+) is required as a cofactor.

The enzyme catalyses 1D-myo-inositol 2-acetamido-2-deoxy-alpha-D-glucopyranoside + H2O = 1D-myo-inositol 2-amino-2-deoxy-alpha-D-glucopyranoside + acetate. In terms of biological role, catalyzes the deacetylation of 1D-myo-inositol 2-acetamido-2-deoxy-alpha-D-glucopyranoside (GlcNAc-Ins) in the mycothiol biosynthesis pathway. This Mycobacterium tuberculosis (strain ATCC 25177 / H37Ra) protein is 1D-myo-inositol 2-acetamido-2-deoxy-alpha-D-glucopyranoside deacetylase.